The following is a 381-amino-acid chain: Spindlin interactor and repressor of chromatin-binding protein (381 aa).

Residue Lys49 forms a Glycyl lysine isopeptide (Lys-Gly) (interchain with G-Cter in SUMO2) linkage. 2 positions are modified to phosphoserine: Ser122 and Ser149. Residues 148–158 show a composition bias toward polar residues; that stretch reads PSLPSLESGQD. Residues 148–170 form a disordered region; that stretch reads PSLPSLESGQDGQPDPISNPDPV. Glycyl lysine isopeptide (Lys-Gly) (interchain with G-Cter in SUMO2) cross-links involve residues Lys190 and Lys221. Disordered regions lie at residues 203-270, 285-320, and 335-381; these read PVTP…TDGS, LRTT…LRGT, and AVSL…GSGV. Basic and acidic residues predominate over residues 219–229; that stretch reads RWKESPENEPA. A phosphoserine mark is found at Ser249 and Ser252. Basic and acidic residues predominate over residues 288–299; that stretch reads TDCKDSSKDSRA. Residues Lys291 and Lys295 each participate in a glycyl lysine isopeptide (Lys-Gly) (interchain with G-Cter in SUMO2) cross-link. The segment covering 304–315 has biased composition (low complexity); sequence PQPQNPSSASPP. A phosphoserine mark is found at Ser310 and Ser313.

As to quaternary structure, interacts with SPIN1, SPIN2A, SPIN2B, SPIN3 and SPIN4. Interacts with TCF7L2 in a SPIN1-dependent manner. Interacts with PARP1; promoting PARP1 ADP-ribosyltransferase activity.

Its subcellular location is the nucleus. It localises to the chromosome. Chromatin protein that stabilizes SPIN1 and enhances its association with histone H3 trimethylated at both 'Lys-4' and 'Lys-9' (H3K4me3K9me3). Positively regulates poly-ADP-ribosylation in response to DNA damage; acts by facilitating PARP1 ADP-ribosyltransferase activity. The polypeptide is Spindlin interactor and repressor of chromatin-binding protein (Mus musculus (Mouse)).